The sequence spans 580 residues: Proline--tRNA ligase (580 aa).

The protein belongs to the class-II aminoacyl-tRNA synthetase family. ProS type 1 subfamily. As to quaternary structure, homodimer.

Its subcellular location is the cytoplasm. The enzyme catalyses tRNA(Pro) + L-proline + ATP = L-prolyl-tRNA(Pro) + AMP + diphosphate. In terms of biological role, catalyzes the attachment of proline to tRNA(Pro) in a two-step reaction: proline is first activated by ATP to form Pro-AMP and then transferred to the acceptor end of tRNA(Pro). As ProRS can inadvertently accommodate and process non-cognate amino acids such as alanine and cysteine, to avoid such errors it has two additional distinct editing activities against alanine. One activity is designated as 'pretransfer' editing and involves the tRNA(Pro)-independent hydrolysis of activated Ala-AMP. The other activity is designated 'posttransfer' editing and involves deacylation of mischarged Ala-tRNA(Pro). The misacylated Cys-tRNA(Pro) is not edited by ProRS. The sequence is that of Proline--tRNA ligase from Polynucleobacter necessarius subsp. necessarius (strain STIR1).